Reading from the N-terminus, the 470-residue chain is Putative ankyrin repeat protein L279 (470 aa).

ANK repeat units follow at residues 119–148, 149–178, 372–401, and 403–431; these read RDDY…NPGT, NKYA…GSDK, ETQG…NVNE, and NGKP…DISL.

This chain is Putative ankyrin repeat protein L279, found in Acanthamoeba polyphaga (Amoeba).